Reading from the N-terminus, the 375-residue chain is Alcohol dehydrogenase 1 (375 aa).

Ala-1 is modified (N-acetylalanine). The Zn(2+) site is built by Cys-46, His-68, Cys-98, Cys-101, Cys-104, Cys-112, and Cys-175. NAD(+) contacts are provided by residues 200–205 (GLGGVG), Asp-224, Lys-229, 293–295 (VGV), and Arg-370.

It belongs to the zinc-containing alcohol dehydrogenase family. Class-I subfamily. Homodimer. Requires Zn(2+) as cofactor.

The protein localises to the cytoplasm. The catalysed reaction is a primary alcohol + NAD(+) = an aldehyde + NADH + H(+). The enzyme catalyses a secondary alcohol + NAD(+) = a ketone + NADH + H(+). The chain is Alcohol dehydrogenase 1 from Columba livia (Rock dove).